The sequence spans 351 residues: Protein pelota homolog (351 aa).

It belongs to the eukaryotic release factor 1 family. Pelota subfamily. As to quaternary structure, monomer. The cofactor is a divalent metal cation.

The protein resides in the cytoplasm. Functionally, may function in recognizing stalled ribosomes, interact with stem-loop structures in stalled mRNA molecules, and effect endonucleolytic cleavage of the mRNA. May play a role in the release non-functional ribosomes and degradation of damaged mRNAs. Has endoribonuclease activity. The polypeptide is Protein pelota homolog (Methanosphaera stadtmanae (strain ATCC 43021 / DSM 3091 / JCM 11832 / MCB-3)).